We begin with the raw amino-acid sequence, 447 residues long: Oxysterols receptor LXR-alpha (447 aa).

A disordered region spans residues 1–88 (MSLWLEAPVP…LRPQKRKKGP (88 aa)). The tract at residues 1 to 96 (MSLWLEAPVP…GPAPKMLGNE (96 aa)) is transactivation AF-1; required for ligand-independent transactivation function. A DNA-binding region (nuclear receptor) is located at residues 95–170 (NELCSVCGDK…AGMREECVLS (76 aa)). 2 consecutive NR C4-type zinc fingers follow at residues 98 to 118 (CSVC…CEGC) and 134 to 158 (CHSG…LRKC). Residues 178–203 (KMKRQEEEQAQATSAPPRASSPPQVL) are disordered. The span at 187 to 203 (AQATSAPPRASSPPQVL) shows a compositional bias: low complexity. Residues 205 to 447 (QLSPEQLGMI…LLSEIWDVHE (243 aa)) form a transactivation AF-2; required for ligand-dependent transactivation function; mediates interaction with CCAR2 region. The 239-residue stretch at 209 to 447 (EQLGMIEKLV…LLSEIWDVHE (239 aa)) folds into the NR LBD domain.

Belongs to the nuclear hormone receptor family. NR1 subfamily. In terms of assembly, heterodimer of NR1H3 and RXR (retinoic acid receptor). Interacts with CCAR2 (via N-terminus) in a ligand-independent manner. Interacts with SIRT1 and this interaction is inhibited by CCAR2. Ubiquitinated by UBR5, leading to its degradation: UBR5 specifically recognizes and binds ligand-bound NR1H3 when it is not associated with coactivators (NCOAs). In presence of NCOAs, the UBR5-degron is not accessible, preventing its ubiquitination and degradation.

The protein resides in the nucleus. Its subcellular location is the cytoplasm. In terms of biological role, nuclear receptor that exhibits a ligand-dependent transcriptional activation activity. Interaction with retinoic acid receptor (RXR) shifts RXR from its role as a silent DNA-binding partner to an active ligand-binding subunit in mediating retinoid responses through target genes defined by LXRES. LXRES are DR4-type response elements characterized by direct repeats of two similar hexanuclotide half-sites spaced by four nucleotides. Plays an important role in the regulation of cholesterol homeostasis, regulating cholesterol uptake through MYLIP-dependent ubiquitination of LDLR, VLDLR and LRP8. Interplays functionally with RORA for the regulation of genes involved in liver metabolism. Induces LPCAT3-dependent phospholipid remodeling in endoplasmic reticulum (ER) membranes of hepatocytes, driving SREBF1 processing and lipogenesis. Via LPCAT3, triggers the incorporation of arachidonate into phosphatidylcholines of ER membranes, increasing membrane dynamics and enabling triacylglycerols transfer to nascent very low-density lipoprotein (VLDL) particles. Via LPCAT3 also counteracts lipid-induced ER stress response and inflammation, likely by modulating SRC kinase membrane compartmentalization and limiting the synthesis of lipid inflammatory mediators. The sequence is that of Oxysterols receptor LXR-alpha (NR1H3) from Bos taurus (Bovine).